The sequence spans 173 residues: Lipoprotein signal peptidase (173 aa).

A run of 2 helical transmembrane segments spans residues 67 to 87 (WISLLVSVGLCVYALVGPHLG) and 92 to 112 (MGFGLLLGGAVGNGFDRFAFG). Residues Asp-116 and Asp-132 contribute to the active site. A helical membrane pass occupies residues 125–145 (FPVFNGADIAINLGLACLLIG). The disordered stretch occupies residues 151–173 (SRTPAPARPASKQIREPTDTTGG). The span at 163-173 (QIREPTDTTGG) shows a compositional bias: basic and acidic residues.

Belongs to the peptidase A8 family.

Its subcellular location is the cell inner membrane. The enzyme catalyses Release of signal peptides from bacterial membrane prolipoproteins. Hydrolyzes -Xaa-Yaa-Zaa-|-(S,diacylglyceryl)Cys-, in which Xaa is hydrophobic (preferably Leu), and Yaa (Ala or Ser) and Zaa (Gly or Ala) have small, neutral side chains.. The protein operates within protein modification; lipoprotein biosynthesis (signal peptide cleavage). In terms of biological role, this protein specifically catalyzes the removal of signal peptides from prolipoproteins. The polypeptide is Lipoprotein signal peptidase (Gloeobacter violaceus (strain ATCC 29082 / PCC 7421)).